We begin with the raw amino-acid sequence, 355 residues long: tRNA N6-adenosine threonylcarbamoyltransferase (355 aa).

Residues histidine 111 and histidine 115 each contribute to the Fe cation site. Residues 134–138 (LVSGG), aspartate 167, glycine 180, aspartate 184, and asparagine 279 each bind substrate. Residue aspartate 307 coordinates Fe cation.

This sequence belongs to the KAE1 / TsaD family. The cofactor is Fe(2+).

Its subcellular location is the cytoplasm. The enzyme catalyses L-threonylcarbamoyladenylate + adenosine(37) in tRNA = N(6)-L-threonylcarbamoyladenosine(37) in tRNA + AMP + H(+). Required for the formation of a threonylcarbamoyl group on adenosine at position 37 (t(6)A37) in tRNAs that read codons beginning with adenine. Is involved in the transfer of the threonylcarbamoyl moiety of threonylcarbamoyl-AMP (TC-AMP) to the N6 group of A37, together with TsaE and TsaB. TsaD likely plays a direct catalytic role in this reaction. The sequence is that of tRNA N6-adenosine threonylcarbamoyltransferase from Picosynechococcus sp. (strain ATCC 27264 / PCC 7002 / PR-6) (Agmenellum quadruplicatum).